The chain runs to 460 residues: Nitrogenase iron-iron protein beta chain (460 aa).

Residues Cys20, Cys45, Cys104, and Ser143 each contribute to the [8Fe-7S] cluster site.

It belongs to the NifD/NifK/NifE/NifN family. In terms of assembly, hexamer of two alpha, two beta, and two delta chains. The cofactor is [8Fe-7S] cluster.

The enzyme catalyses N2 + 8 reduced [2Fe-2S]-[ferredoxin] + 16 ATP + 16 H2O = H2 + 8 oxidized [2Fe-2S]-[ferredoxin] + 2 NH4(+) + 16 ADP + 16 phosphate + 6 H(+). In terms of biological role, this iron-iron protein is part of the nitrogenase complex that catalyzes the key enzymatic reactions in nitrogen fixation. Other nitrogenase complexes utilize a molybdenum-iron protein or a vanadium-iron protein. The polypeptide is Nitrogenase iron-iron protein beta chain (anfK) (Rhodobacter capsulatus (Rhodopseudomonas capsulata)).